The chain runs to 260 residues: uncharacterized protein (260 aa).

The signal sequence occupies residues 1-22 (MKSIKRIGLCISLLILIIFATS). Cys23 carries the N-palmitoyl cysteine lipid modification. Cys23 carries the S-diacylglycerol cysteine lipid modification.

Belongs to the staphylococcal tandem lipoprotein family.

The protein localises to the cell membrane. This is an uncharacterized protein from Staphylococcus aureus (strain N315).